The primary structure comprises 325 residues: Glutarate 2-hydroxylase (325 aa).

His160, Asp162, and His292 together coordinate Fe cation.

It belongs to the glutarate hydroxylase family. As to quaternary structure, homotetramer. It depends on Fe(2+) as a cofactor.

The enzyme catalyses glutarate + 2-oxoglutarate + O2 = (S)-2-hydroxyglutarate + succinate + CO2. Its pathway is amino-acid degradation. In terms of biological role, acts as an alpha-ketoglutarate-dependent dioxygenase catalyzing hydroxylation of glutarate (GA) to L-2-hydroxyglutarate (L2HG). Functions in a L-lysine degradation pathway that proceeds via cadaverine, glutarate and L-2-hydroxyglutarate. This is Glutarate 2-hydroxylase from Escherichia coli (strain UTI89 / UPEC).